The following is a 446-amino-acid chain: Sensor-type histidine kinase PrrB (446 aa).

2 helical membrane-spanning segments follow: residues 19–39 (VVATAIGAAIPVLIVGTVVWV) and 151–171 (LLICTFAIGAAAVFAWLLAAF). One can recognise an HAMP domain in the interval 172-222 (AVRPFKQLAEQTRSIDAGDEAPRVEVHGASEAIEIAEAMRGMLQRIWNEQN). The 210-residue stretch at 237–446 (VSSHELRTPL…RLVLRLPGPS (210 aa)) folds into the Histidine kinase domain. His240 is modified (phosphohistidine; by autocatalysis).

In terms of processing, autophosphorylated.

It localises to the cell membrane. The enzyme catalyses ATP + protein L-histidine = ADP + protein N-phospho-L-histidine.. Its function is as follows. Member of the two-component regulatory system PrrB/PrrA that is involved specifically in early intracellular multiplication of Mycobacterium and is essential for its viability. Functions as a sensor protein kinase which is autophosphorylated at a histidine residue and transfers its phosphate group to the conserved aspartic acid residue in the regulatory domain of PrrA. In turn, PrrA binds to the upstream promoter regions of target genes including itself to positively regulate their expression. In Mycobacterium bovis (strain ATCC BAA-935 / AF2122/97), this protein is Sensor-type histidine kinase PrrB (prrB).